Here is a 413-residue protein sequence, read N- to C-terminus: Multifunctional CCA protein (413 aa).

The ATP site is built by G8 and R11. G8 and R11 together coordinate CTP. Positions 21 and 23 each coordinate Mg(2+). The ATP site is built by R91, R137, and R140. Residues R91, R137, and R140 each contribute to the CTP site. The HD domain maps to 228–329; that stretch reads TGVHTLMTLS…VKLFDAIDAW (102 aa).

This sequence belongs to the tRNA nucleotidyltransferase/poly(A) polymerase family. Bacterial CCA-adding enzyme type 1 subfamily. Monomer. Can also form homodimers and oligomers. Requires Mg(2+) as cofactor. It depends on Ni(2+) as a cofactor.

It carries out the reaction a tRNA precursor + 2 CTP + ATP = a tRNA with a 3' CCA end + 3 diphosphate. The catalysed reaction is a tRNA with a 3' CCA end + 2 CTP + ATP = a tRNA with a 3' CCACCA end + 3 diphosphate. Catalyzes the addition and repair of the essential 3'-terminal CCA sequence in tRNAs without using a nucleic acid template. Adds these three nucleotides in the order of C, C, and A to the tRNA nucleotide-73, using CTP and ATP as substrates and producing inorganic pyrophosphate. tRNA 3'-terminal CCA addition is required both for tRNA processing and repair. Also involved in tRNA surveillance by mediating tandem CCA addition to generate a CCACCA at the 3' terminus of unstable tRNAs. While stable tRNAs receive only 3'-terminal CCA, unstable tRNAs are marked with CCACCA and rapidly degraded. The sequence is that of Multifunctional CCA protein from Salmonella schwarzengrund (strain CVM19633).